The chain runs to 7839 residues: Nonribosomal peptide synthetase GRA1 (7839 aa).

Polar residues predominate over residues 1–23; the sequence is MALLNGKSTLPNGHNSSIESPNG. Positions 1–26 are disordered; sequence MALLNGKSTLPNGHNSSIESPNGYTE. The tract at residues 264–650 is adenylation 1; it reads LASPNSCAVH…LGRIDDQVKI (387 aa). The region spanning 793 to 866 is the Carrier 1 domain; sequence SAEALVLRQL…LQAEMSEKKK (74 aa). S827 is subject to O-(pantetheine 4'-phosphoryl)serine. Residues 916 to 1332 are condensation 1; it reads DIYPASPLQE…ILSPSDVAQI (417 aa). Positions 1351-1742 are adenylation 2; sequence FFTQVKRSPD…QRKDAQLKIR (392 aa). In terms of domain architecture, Carrier 2 spans 1880–1957; it reads ELETEAERTM…AMSRQATVSD (78 aa). The residue at position 1918 (S1918) is an O-(pantetheine 4'-phosphoryl)serine. Residues 1997–2413 form a condensation 2 region; that stretch reads DLYPCTPFQE…LISPSDMETI (417 aa). Residues 2432 to 2828 are adenylation 3; sequence FDRRLSQKHS…GRRDTQLKIR (397 aa). The Carrier 3 domain maps to 2963 to 3040; that stretch reads IPTTQMEWNL…DLAQAIVLDT (78 aa). An O-(pantetheine 4'-phosphoryl)serine modification is found at S3001. The condensation 3 stretch occupies residues 3084 to 3496; the sequence is DIYPCTPLQD…QVDLISDSDH (413 aa). An adenylation 4 region spans residues 3520–3923; sequence RLAVSNPDAE…GRRDSQVKLR (404 aa). One can recognise a Carrier 4 domain in the interval 4057-4134; it reads RPLTEREKDL…DMAAMTTSLS (78 aa). Residue S4095 is modified to O-(pantetheine 4'-phosphoryl)serine. Positions 4234-4569 are condensation 4; the sequence is NLEEFVGRQS…MMNPDDAEEI (336 aa). Residues 4591-4982 form an adenylation 5 region; that stretch reads HSKGCPDRIA…VSRKDTQVKF (392 aa). The Carrier 5 domain maps to 5113 to 5189; that stretch reads ALSSDEESQL…DMALCMTSAQ (77 aa). O-(pantetheine 4'-phosphoryl)serine is present on S5150. The tract at residues 5224–5653 is condensation 5; the sequence is EDIYPCSALQ…VSPSDQAEIL (430 aa). The interval 5671–6069 is adenylation 6; it reads FESRARLQPS…GRRDTQVKLR (399 aa). One can recognise a Carrier 6 domain in the interval 6207 to 6282; it reads FPSSLAEQQM…HMAAIATTFT (76 aa). An O-(pantetheine 4'-phosphoryl)serine modification is found at S6243. The segment at 6321-6730 is condensation 6; it reads QDIYPCSALQ…RLADMDLTGP (410 aa). Residues 6756–7147 form an adenylation 7 region; that stretch reads EQRVKSQPDS…LGRKDSQIKL (392 aa). Residues 7290–7366 form the Carrier 7 domain; the sequence is KAATPNEKTL…DLARVSRQSI (77 aa). S7327 is modified (O-(pantetheine 4'-phosphoryl)serine). The segment at 7404 to 7704 is condensation7; sequence HDIYPCTQVQ…LDYAKKRASS (301 aa).

It belongs to the NRP synthetase family.

It functions in the pathway mycotoxin biosynthesis. Nonribosomal peptide synthetase; part of the gene cluster that mediates the biosynthesis of gramillins A and B, bicyclic lipopeptides that induce cell death in maize leaves but not in wheat leaves. The nonribosomal peptide synthetase GRA1 incorporates respectively a glutamic adic (Glu), a leucine (Leu), a serine (Ser), a hydroxyglutamine (HOGln), a 2-amino decanoic acid, and 2 cysteins (CysB and CysA). The biosynthesis of 2-amino decanoic acid incorporated in gramillins could be initiated by a fatty acid synthase composed of the alpha and beta subunits FGSG_00036 and FGSG_11656. The cytochrome P450 monooxygenase FGSG_15680 could hydroxylate the fatty acid chain. Subsequent oxidation to the ketone by the oxidoreductase FGSG_00048 and transamination by aminotransferase FGSG_00049 could form 2-amino-decanoic acid. On the other hand, FGSG_15680 could also be responsible for the HO-modified glutamine at the gamma-position. Whether hydroxylation occurs on the fully assembled product or on the Gln residue prior to assembly into the gramillins requires further proof. The thioredoxin FGSG_00043 could also be required for the disulfide-bond formation between CysA and CysB. The specific involvement of the remaining proteins from the cluster is more difficult to discern, but could have broader regulatory (FGSG_00040 and FGSG_11657) or enzymatic functions (FGSG_00044 and FGSG_00045). The final C-domain of GRA1 does not possess the expected sequence of a termination CT domain, often implicated in macrocyclization and release of a cyclopeptidein fungal NRPs; and the thioesterase FGSG_00047 may act in concert with the terminal C-domain of GRA1 to catalyze the formation of the macrocyclic anhydride and release of the products. In Gibberella zeae (strain ATCC MYA-4620 / CBS 123657 / FGSC 9075 / NRRL 31084 / PH-1) (Wheat head blight fungus), this protein is Nonribosomal peptide synthetase GRA1.